The chain runs to 108 residues: Iron-sulfur cluster assembly protein CyaY (108 aa).

This sequence belongs to the frataxin family.

Involved in iron-sulfur (Fe-S) cluster assembly. May act as a regulator of Fe-S biogenesis. This Pseudomonas aeruginosa (strain ATCC 15692 / DSM 22644 / CIP 104116 / JCM 14847 / LMG 12228 / 1C / PRS 101 / PAO1) protein is Iron-sulfur cluster assembly protein CyaY.